Here is a 346-residue protein sequence, read N- to C-terminus: Ribonucleoside-diphosphate reductase subunit beta (346 aa).

Fe cation-binding residues include Glu89, Glu120, and His123. Tyr129 is an active-site residue. Residues Glu193, Glu227, and His230 each contribute to the Fe cation site.

This sequence belongs to the ribonucleoside diphosphate reductase small chain family. As to quaternary structure, tetramer of two alpha and two beta subunits. The cofactor is Fe cation.

The enzyme catalyses a 2'-deoxyribonucleoside 5'-diphosphate + [thioredoxin]-disulfide + H2O = a ribonucleoside 5'-diphosphate + [thioredoxin]-dithiol. Provides the precursors necessary for DNA synthesis. Catalyzes the biosynthesis of deoxyribonucleotides from the corresponding ribonucleotides. In Chlamydia trachomatis serovar D (strain ATCC VR-885 / DSM 19411 / UW-3/Cx), this protein is Ribonucleoside-diphosphate reductase subunit beta (nrdB).